The sequence spans 229 residues: Cytidylate kinase (229 aa).

ATP is bound at residue glycine 12–threonine 20.

This sequence belongs to the cytidylate kinase family. Type 1 subfamily.

It localises to the cytoplasm. It catalyses the reaction CMP + ATP = CDP + ADP. It carries out the reaction dCMP + ATP = dCDP + ADP. In Pseudomonas fluorescens (strain ATCC BAA-477 / NRRL B-23932 / Pf-5), this protein is Cytidylate kinase.